A 233-amino-acid chain; its full sequence is Lipoprotein-releasing system ATP-binding protein LolD (233 aa).

The region spanning 7–233 is the ABC transporter domain; sequence IHCEKLSKTY…QLQSESERNH (227 aa). 43 to 50 serves as a coordination point for ATP; that stretch reads GASGAGKS.

It belongs to the ABC transporter superfamily. Lipoprotein translocase (TC 3.A.1.125) family. In terms of assembly, the complex is composed of two ATP-binding proteins (LolD) and two transmembrane proteins (LolC and LolE).

It localises to the cell inner membrane. In terms of biological role, part of the ABC transporter complex LolCDE involved in the translocation of mature outer membrane-directed lipoproteins, from the inner membrane to the periplasmic chaperone, LolA. Responsible for the formation of the LolA-lipoprotein complex in an ATP-dependent manner. The protein is Lipoprotein-releasing system ATP-binding protein LolD of Coxiella burnetii (strain RSA 493 / Nine Mile phase I).